A 130-amino-acid polypeptide reads, in one-letter code: Chaperone protein SycT (130 aa).

Binds to YopT.

Its function is as follows. Functions as a specific chaperone for YopT. In Yersinia enterocolitica, this protein is Chaperone protein SycT (sycT).